A 310-amino-acid chain; its full sequence is Cytosolic Fe-S cluster assembly factor Nubp1 homolog (310 aa).

[4Fe-4S] cluster contacts are provided by cysteine 8, cysteine 22, cysteine 25, and cysteine 31. Residue 62-69 participates in ATP binding; it reads GKGGVGKS. Cysteine 239 and cysteine 242 together coordinate [4Fe-4S] cluster.

Belongs to the Mrp/NBP35 ATP-binding proteins family. NUBP1/NBP35 subfamily. As to quaternary structure, heterotetramer of 2 Nubp1 and 2 Nubp2 chains. Requires [4Fe-4S] cluster as cofactor.

The protein resides in the cytoplasm. In terms of biological role, component of the cytosolic iron-sulfur (Fe/S) protein assembly (CIA) machinery. Required for maturation of extramitochondrial Fe-S proteins. The Nubp1-Nubp2 heterotetramer forms a Fe-S scaffold complex, mediating the de novo assembly of an Fe-S cluster and its transfer to target apoproteins. The chain is Cytosolic Fe-S cluster assembly factor Nubp1 homolog from Drosophila willistoni (Fruit fly).